The following is an 88-amino-acid chain: Phosphocarrier protein HPr (88 aa).

Residues 1–88 form the HPr domain; sequence MKKIQVVVKD…KAVLEKHQVI (88 aa). Catalysis depends on histidine 15, which acts as the Pros-phosphohistidine intermediate. Serine 47 bears the Phosphoserine; by HPrK/P mark.

Belongs to the HPr family.

It localises to the cytoplasm. With respect to regulation, phosphorylation on Ser-47 inhibits the phosphoryl transfer from enzyme I to HPr. General (non sugar-specific) component of the phosphoenolpyruvate-dependent sugar phosphotransferase system (sugar PTS). This major carbohydrate active-transport system catalyzes the phosphorylation of incoming sugar substrates concomitantly with their translocation across the cell membrane. The phosphoryl group from phosphoenolpyruvate (PEP) is transferred to the phosphoryl carrier protein HPr by enzyme I. Phospho-HPr then transfers it to the PTS EIIA domain. In terms of biological role, P-Ser-HPr interacts with the catabolite control protein A (CcpA), forming a complex that binds to DNA at the catabolite response elements cre, operator sites preceding a large number of catabolite-regulated genes. Thus, P-Ser-HPr is a corepressor in carbon catabolite repression (CCR), a mechanism that allows bacteria to coordinate and optimize the utilization of available carbon sources. P-Ser-HPr also plays a role in inducer exclusion, in which it probably interacts with several non-PTS permeases and inhibits their transport activity. This chain is Phosphocarrier protein HPr (ptsH), found in Mycoplasma pneumoniae (strain ATCC 29342 / M129 / Subtype 1) (Mycoplasmoides pneumoniae).